A 432-amino-acid chain; its full sequence is C-type cytochrome OmcS (432 aa).

The first 25 residues, 1-25 (MKKGMKVSLSVAAAALLMSAPAAFA), serve as a signal peptide directing secretion.

Heme is required as a cofactor.

Its subcellular location is the cell outer membrane. The protein resides in the cell surface. Plays an important role in extracellular electron transfer. Can transfer electrons to insoluble Fe(3+) oxides as well as other extracellular electron acceptors, including Mn(4+) oxide and humic substances. Essential for direct interspecies electron transfer (DIET) in cocultures with G.metallireducens. The sequence is that of C-type cytochrome OmcS from Geobacter sulfurreducens (strain ATCC 51573 / DSM 12127 / PCA).